The sequence spans 313 residues: Type II methyltransferase M.NlaX (313 aa).

The region spanning 2-308 is the SAM-dependent MTase C5-type domain; sequence FKIIDLFAGI…EQMKAALSAV (307 aa). The active site involves Cys74.

Belongs to the class I-like SAM-binding methyltransferase superfamily. C5-methyltransferase family.

The catalysed reaction is a 2'-deoxycytidine in DNA + S-adenosyl-L-methionine = a 5-methyl-2'-deoxycytidine in DNA + S-adenosyl-L-homocysteine + H(+). In terms of biological role, a methylase, recognizes the double-stranded sequence 5'-CCNGG-3' and methylates C-2 on both strands. May be the equivalent of dcm in this bacteria, or it may protect the DNA from cleavage by the putative NlaXP endonuclease. This is Type II methyltransferase M.NlaX (nlaXM) from Neisseria lactamica.